Here is a 234-residue protein sequence, read N- to C-terminus: FAS1 domain-containing protein AFUA_8G05360 (234 aa).

Positions 1-21 (MRRTLFVLFVVAFCFIGSVIA) are cleaved as a signal peptide. Positions 83–231 (KPVVSDVLPK…GELWILNSVL (149 aa)) constitute an FAS1 domain.

The protein resides in the vacuole. This Aspergillus fumigatus (strain ATCC MYA-4609 / CBS 101355 / FGSC A1100 / Af293) (Neosartorya fumigata) protein is FAS1 domain-containing protein AFUA_8G05360.